The sequence spans 305 residues: Oxygen-dependent coproporphyrinogen-III oxidase (305 aa).

S92 is a binding site for substrate. Residues H96 and H106 each coordinate a divalent metal cation. H106 acts as the Proton donor in catalysis. 108–110 lines the substrate pocket; it reads NVR. A divalent metal cation contacts are provided by H145 and H175. The segment at 239–274 is important for dimerization; that stretch reads YVEFNLLFDRGTLFGLQSGGRAESILISLPPLVRWE. 257–259 contributes to the substrate binding site; the sequence is GGR.

The protein belongs to the aerobic coproporphyrinogen-III oxidase family. As to quaternary structure, homodimer. The cofactor is a divalent metal cation.

Its subcellular location is the cytoplasm. The enzyme catalyses coproporphyrinogen III + O2 + 2 H(+) = protoporphyrinogen IX + 2 CO2 + 2 H2O. It functions in the pathway porphyrin-containing compound metabolism; protoporphyrin-IX biosynthesis; protoporphyrinogen-IX from coproporphyrinogen-III (O2 route): step 1/1. In terms of biological role, involved in the heme biosynthesis. Catalyzes the aerobic oxidative decarboxylation of propionate groups of rings A and B of coproporphyrinogen-III to yield the vinyl groups in protoporphyrinogen-IX. This Xylella fastidiosa (strain 9a5c) protein is Oxygen-dependent coproporphyrinogen-III oxidase.